Reading from the N-terminus, the 283-residue chain is Galactooligosaccharides transport system permease protein GanQ (283 aa).

A run of 6 helical transmembrane segments spans residues 13–33 (LLFS…PLLW), 82–102 (ISLF…YAFS), 115–135 (LFLL…FVLA), 137–157 (ILGM…GLIP), 188–208 (IFFQ…AMNG), and 248–268 (TTFA…FIML). The region spanning 76-268 (YVNSMKISLF…IPVAVIFIML (193 aa)) is the ABC transmembrane type-1 domain.

It belongs to the binding-protein-dependent transport system permease family. As to quaternary structure, the complex is composed of two ATP-binding proteins (MsmX), two transmembrane proteins (GanP and GanQ) and a solute-binding protein (GanS).

Its subcellular location is the cell membrane. Its function is as follows. Involved in galactan degradation. Part of the ABC transporter complex GanPQS involved in the uptake of galactooligosaccharides. Responsible for the translocation of the substrate across the membrane. In Bacillus subtilis (strain 168), this protein is Galactooligosaccharides transport system permease protein GanQ (ganQ).